The sequence spans 360 residues: MLLLLAEYLQQFHKGFAVFQYLSLRGILGVLTALSLALWLGPWMIRTLQIRQIGQAVRNDGPQSHLSKSGTPTMGGALILSAIAVSTLLWADLSNRYVWVVLIVTLAFGAIGWVDDYRKVIEKNSRGLPSRWKYFWQSVFGLAAAVFLYKTAPTSVETTLILPFIKDVTIPLGVGFVVLTYFVIVGSSNAVNLTDGLDGLAIMPTVMVGGALGIFCYLSGNVKFAEYLLIPYVPGSGELIVFCGALIGAGLGFLWFNTYPAQVFMGDVGALALGAALGTIAVIVRQEIVLFIMGGIFVVETLSVVIQVASFKLTGKRVFRMAPIHHHFELKGWPEPRVIVRFWIITVILVLIGLATLKLR.

Helical transmembrane passes span 25 to 45 (RGIL…PWMI), 73 to 93 (TMGG…WADL), 97 to 117 (YVWV…VDDY), 134 to 154 (YFWQ…TAPT), 168 to 188 (VTIP…VGSS), 199 to 219 (GLAI…CYLS), 236 to 256 (SGEL…FLWF), 263 to 283 (VFMG…IAVI), 288 to 308 (IVLF…VIQV), and 338 to 358 (VIVR…ATLK).

Belongs to the glycosyltransferase 4 family. MraY subfamily. Mg(2+) serves as cofactor.

The protein resides in the cell inner membrane. The catalysed reaction is UDP-N-acetyl-alpha-D-muramoyl-L-alanyl-gamma-D-glutamyl-meso-2,6-diaminopimeloyl-D-alanyl-D-alanine + di-trans,octa-cis-undecaprenyl phosphate = di-trans,octa-cis-undecaprenyl diphospho-N-acetyl-alpha-D-muramoyl-L-alanyl-D-glutamyl-meso-2,6-diaminopimeloyl-D-alanyl-D-alanine + UMP. It functions in the pathway cell wall biogenesis; peptidoglycan biosynthesis. Functionally, catalyzes the initial step of the lipid cycle reactions in the biosynthesis of the cell wall peptidoglycan: transfers peptidoglycan precursor phospho-MurNAc-pentapeptide from UDP-MurNAc-pentapeptide onto the lipid carrier undecaprenyl phosphate, yielding undecaprenyl-pyrophosphoryl-MurNAc-pentapeptide, known as lipid I. The polypeptide is Phospho-N-acetylmuramoyl-pentapeptide-transferase (Pseudomonas putida (strain ATCC 700007 / DSM 6899 / JCM 31910 / BCRC 17059 / LMG 24140 / F1)).